The primary structure comprises 284 residues: 2-dehydro-3-deoxyphosphooctonate aldolase (284 aa).

This sequence belongs to the KdsA family.

It localises to the cytoplasm. The enzyme catalyses D-arabinose 5-phosphate + phosphoenolpyruvate + H2O = 3-deoxy-alpha-D-manno-2-octulosonate-8-phosphate + phosphate. It functions in the pathway carbohydrate biosynthesis; 3-deoxy-D-manno-octulosonate biosynthesis; 3-deoxy-D-manno-octulosonate from D-ribulose 5-phosphate: step 2/3. It participates in bacterial outer membrane biogenesis; lipopolysaccharide biosynthesis. The sequence is that of 2-dehydro-3-deoxyphosphooctonate aldolase from Pectobacterium carotovorum subsp. carotovorum (strain PC1).